The primary structure comprises 413 residues: Protein FAM8A1 (413 aa).

The segment covering 1 to 10 (MAEGPEEARG) has biased composition (basic and acidic residues). Residues 1-105 (MAEGPEEARG…PEAAAPRERP (105 aa)) are disordered. Residues 49–64 (APGRPTAPGLAAAAAA) show a composition bias toward low complexity. Residues 65–78 (DKLEPPRELRKRGE) show a composition bias toward basic and acidic residues. The segment at 107–139 (RLSAREYSRQVHEWLWQSYCGYLTWHSGLAAFP) is necessary and sufficient to interact with SYVN1. The disordered stretch occupies residues 217–236 (PVTRVGSAAPSRSPSETGRQ). Position 229 is a phosphoserine (Ser-229). One can recognise an RDD domain in the interval 242–408 (VIPSLAHRFM…DIVAGTIVVK (167 aa)). Helical transmembrane passes span 257–277 (FFIL…LSGI), 304–324 (MMVV…ICIW), and 371–391 (ALIK…LLFF).

As to quaternary structure, component of the HRD1 complex, which comprises at least SYNV1/HRD1, FAM8A1, HERPUD1/HERP, OS9, SEL1L and UBE2J1. This interaction stabilizes FAM8A1 protein, preventing its proteasomal degradation. FAM8A1 binding to SYNV1 may promote recruitment of HERPUD1 to the HRD1 complex. As to expression, ubiquitously expressed, with a higher level of expression in testis.

The protein resides in the membrane. In terms of biological role, plays a role in the assembly of the HRD1 complex, a complex involved in the ubiquitin-proteasome-dependent process of ER-associated degradation (ERAD). This chain is Protein FAM8A1 (FAM8A1), found in Homo sapiens (Human).